We begin with the raw amino-acid sequence, 358 residues long: Gibberellin 3-beta-dioxygenase 1 (358 aa).

The Fe2OG dioxygenase domain occupies 204 to 308 (DLNWAQAALQ…RLSVAFLWGP (105 aa)). 3 residues coordinate Fe cation: His-232, Asp-234, and His-289. Arg-299 is an active-site residue.

It belongs to the iron/ascorbate-dependent oxidoreductase family. GA3OX subfamily. L-ascorbate serves as cofactor. It depends on Fe cation as a cofactor. In terms of tissue distribution, expressed in stems, roots, leaves, flowers, and siliques. Highly expressed near the nodes in stems and in the stamen filaments of flowers. Detected in developing cotyledons, vegetative shoot apical meristem and non-meristematic, non-elongation regions of the roots. Found in the cortex and the endodermis of the embryo axis in germinating seeds and in the placenta in developing siliques.

It catalyses the reaction gibberellin A9 + 2-oxoglutarate + O2 = gibberellin A4 + succinate + CO2. The catalysed reaction is gibberellin A20 + 2-oxoglutarate + O2 = gibberellin A1 + succinate + CO2. It functions in the pathway plant hormone biosynthesis; gibberellin biosynthesis. Converts the inactive gibberellin (GA) precursors GA9 and GA20 into the bioactives gibberellins GA4 and GA1, respectively. Involved in the production of bioactive GA for vegetative growth and development. This is Gibberellin 3-beta-dioxygenase 1 (GA3OX1) from Arabidopsis thaliana (Mouse-ear cress).